Reading from the N-terminus, the 174-residue chain is Pituitary tumor-transforming gene 1 protein-interacting protein (174 aa).

Positions 1 to 29 are cleaved as a signal peptide; sequence MAPANLGLTPHWVMLLGAVLLLLLSGASA. The Extracellular segment spans residues 30-93; it reads QEPPRVGCSE…RWGVCWVNFE (64 aa). The region spanning 36–89 is the PSI domain; it reads GCSEYTNRSCEECLRNVSCLWCNENKACMDYPVRKILPPASLCKLSSARWGVCW. Residues Asn-42 and Asn-51 are each glycosylated (N-linked (GlcNAc...) asparagine). The chain crosses the membrane as a helical span at residues 94 to 114; it reads ALIITMSVLGGSVLLGITVCC. Over 115-174 the chain is Cytoplasmic; it reads CYCCRRKKSRKPDKSDERAMREQEERRVRQEERRAEMKSRHDEIRKKYGLFKEQNPYEKF. The disordered stretch occupies residues 125–155; the sequence is KPDKSDERAMREQEERRVRQEERRAEMKSRH. Over residues 126–155 the composition is skewed to basic and acidic residues; sequence PDKSDERAMREQEERRVRQEERRAEMKSRH. A coiled-coil region spans residues 127–163; the sequence is DKSDERAMREQEERRVRQEERRAEMKSRHDEIRKKYG. A Phosphotyrosine modification is found at Tyr-171.

As to quaternary structure, interacts with PTTG1.

The protein localises to the cell membrane. It is found in the cytoplasm. The protein resides in the nucleus. Its function is as follows. May facilitate PTTG1 nuclear translocation. This is Pituitary tumor-transforming gene 1 protein-interacting protein (Pttg1ip) from Mus musculus (Mouse).